Consider the following 429-residue polypeptide: C4-dicarboxylate transport protein (429 aa).

Helical transmembrane passes span 9–29 (VLYV…HFYP), 45–65 (LIKM…IAGM), 79–99 (LLYF…ATHI), 149–169 (GEIL…AHLG), 185–205 (VLFG…FGAM), 223–243 (LIGT…GTIA), 308–328 (IYMT…LTWM), and 356–376 (AATL…ILGI).

Belongs to the dicarboxylate/amino acid:cation symporter (DAACS) (TC 2.A.23) family.

The protein localises to the cell inner membrane. Its function is as follows. Responsible for the transport of dicarboxylates such as succinate, fumarate, and malate from the periplasm across the membrane. This is C4-dicarboxylate transport protein from Burkholderia ambifaria (strain MC40-6).